Here is a 535-residue protein sequence, read N- to C-terminus: Cytochrome P450 monooxygenase BOA7 (535 aa).

A helical transmembrane segment spans residues S20–W37. 4 N-linked (GlcNAc...) asparagine glycosylation sites follow: N65, N148, N180, and N420. C478 is a binding site for heme.

Belongs to the cytochrome P450 family. Requires heme as cofactor.

The protein resides in the membrane. It participates in polyketide biosynthesis. Cytochrome P450 monooxygenase; part of the gene cluster B that mediates the biosynthesis of botcinic acid and its botcinin derivatives, acetate-derived polyketides that contribute to virulence when combined with the sesquiterpene botrydial. Botcinic acid and its derivatives have been shown to induce chlorosis and necrosis during host plant infection, but also have antifungal activities. Two polyketide synthases, BOA6 and BOA9, are involved in the biosynthesis of botcinins. BOA6 mediates the formation of the per-methylated tetraketide core by condensation of four units of malonyl-CoA with one unit of acetyl-CoA, which would be methylated in activated methylene groups to yield a bicyclic acid intermediate that could then either be converted to botrylactone derivatives or lose the starter acetate unit through a retro-Claisen type C-C bond cleavage to yield botcinin derivatives. The second polyketide synthase, BOA9, is probably required for the biosynthesis of the tetraketide side chain of botcinins. The methyltransferase (MT) domain within BOA6 is probably responsible for the incorporation of four methyl groups. The trans-enoyl reductase BOA5 might take over the enoyl reductase function of BOA6 that misses an ER domain. The monooxygenases BOA2, BOA3 and BOA4 might be involved in further hydroxylations at C4, C5 and C8, whereas BOA7, close to BOA9, could potentially be involved in the hydroxylation at C4 in the side chain of botcinins. The chain is Cytochrome P450 monooxygenase BOA7 from Botryotinia fuckeliana (strain B05.10) (Noble rot fungus).